The primary structure comprises 413 residues: uncharacterized protein (413 aa).

Residues 25 to 47 (IVNLSALLPLITSTTSTAGSIIT) form a helical membrane-spanning segment.

The protein localises to the host membrane. This is an uncharacterized protein from Acidianus sp. F28 (AFV-2).